We begin with the raw amino-acid sequence, 549 residues long: Siroheme synthase (549 aa).

The interval 1-203 (MNTFPLFFKL…GNENEALAQL (203 aa)) is precorrin-2 dehydrogenase /sirohydrochlorin ferrochelatase. NAD(+)-binding positions include 22-23 (DV) and 43-44 (PS). The residue at position 128 (S128) is a Phosphoserine. The uroporphyrinogen-III C-methyltransferase stretch occupies residues 247–549 (GEVYIVGAGP…DGDLEQLIIG (303 aa)). Residue P256 coordinates S-adenosyl-L-methionine. Catalysis depends on D279, which acts as the Proton acceptor. K301 acts as the Proton donor in catalysis. S-adenosyl-L-methionine is bound by residues 332-334 (GGD), I337, 362-363 (TA), M414, and A443.

It in the N-terminal section; belongs to the precorrin-2 dehydrogenase / sirohydrochlorin ferrochelatase family. The protein in the C-terminal section; belongs to the precorrin methyltransferase family.

It carries out the reaction uroporphyrinogen III + 2 S-adenosyl-L-methionine = precorrin-2 + 2 S-adenosyl-L-homocysteine + H(+). The catalysed reaction is precorrin-2 + NAD(+) = sirohydrochlorin + NADH + 2 H(+). The enzyme catalyses siroheme + 2 H(+) = sirohydrochlorin + Fe(2+). Its pathway is cofactor biosynthesis; adenosylcobalamin biosynthesis; precorrin-2 from uroporphyrinogen III: step 1/1. It functions in the pathway cofactor biosynthesis; adenosylcobalamin biosynthesis; sirohydrochlorin from precorrin-2: step 1/1. It participates in porphyrin-containing compound metabolism; siroheme biosynthesis; precorrin-2 from uroporphyrinogen III: step 1/1. The protein operates within porphyrin-containing compound metabolism; siroheme biosynthesis; siroheme from sirohydrochlorin: step 1/1. Its pathway is porphyrin-containing compound metabolism; siroheme biosynthesis; sirohydrochlorin from precorrin-2: step 1/1. In terms of biological role, multifunctional enzyme that catalyzes the SAM-dependent methylations of uroporphyrinogen III at position C-2 and C-7 to form precorrin-2 via precorrin-1. Then it catalyzes the NAD-dependent ring dehydrogenation of precorrin-2 to yield sirohydrochlorin. Finally, it catalyzes the ferrochelation of sirohydrochlorin to yield siroheme. This chain is Siroheme synthase, found in Psychrobacter arcticus (strain DSM 17307 / VKM B-2377 / 273-4).